The sequence spans 879 residues: Alanine--tRNA ligase (879 aa).

His-566, His-570, Cys-668, and His-672 together coordinate Zn(2+).

The protein belongs to the class-II aminoacyl-tRNA synthetase family. Zn(2+) is required as a cofactor.

The protein resides in the cytoplasm. The catalysed reaction is tRNA(Ala) + L-alanine + ATP = L-alanyl-tRNA(Ala) + AMP + diphosphate. In terms of biological role, catalyzes the attachment of alanine to tRNA(Ala) in a two-step reaction: alanine is first activated by ATP to form Ala-AMP and then transferred to the acceptor end of tRNA(Ala). Also edits incorrectly charged Ser-tRNA(Ala) and Gly-tRNA(Ala) via its editing domain. This Listeria monocytogenes serovar 1/2a (strain ATCC BAA-679 / EGD-e) protein is Alanine--tRNA ligase.